We begin with the raw amino-acid sequence, 663 residues long: Transketolase 2 (663 aa).

H25 is a binding site for substrate. Residues H65 and 113-115 (GPL) contribute to the thiamine diphosphate site. A Mg(2+)-binding site is contributed by D154. G155 and N184 together coordinate thiamine diphosphate. Residues N184 and I186 each contribute to the Mg(2+) site. Positions 259, 356, and 383 each coordinate substrate. H259 contributes to the thiamine diphosphate binding site. Catalysis depends on E410, which acts as the Proton donor. Thiamine diphosphate is bound at residue F436. Substrate is bound by residues H460, D468, and R519.

It belongs to the transketolase family. Homodimer. The cofactor is Mg(2+). Requires Ca(2+) as cofactor. It depends on Mn(2+) as a cofactor. Co(2+) serves as cofactor. Thiamine diphosphate is required as a cofactor.

The catalysed reaction is D-sedoheptulose 7-phosphate + D-glyceraldehyde 3-phosphate = aldehydo-D-ribose 5-phosphate + D-xylulose 5-phosphate. Catalyzes the transfer of a two-carbon ketol group from a ketose donor to an aldose acceptor, via a covalent intermediate with the cofactor thiamine pyrophosphate. The chain is Transketolase 2 (tkt2) from Vibrio parahaemolyticus serotype O3:K6 (strain RIMD 2210633).